The primary structure comprises 509 residues: MVWRQAKWDEPLIFELNNSGANRQGLLINKDDEIRSEIKEMKIPKNLLRENGPNLPSLSELEVVRHFIRLSQMNFGVDVGIMPLGSCTMKYNPKIEEKATAITESHHPLEDEDHVQGILEMIYELQNWFSEITGMDECSLQVPAGSAGEFAGVLMIKKYHEDHNRNYKDTMLVADTAHGTNPASAAMAGYKVMYVKSNGEGLVDMDILREIVNDKTAGFMLTNPNTLGLFEENILEISKIIHSANAILYYDGANLNGVLGIARPGDMGFDIVHLNLHKTFAVPHGGGGPGAGAICAKGELVNYLPYPMVEKVNGKYRLSKIPKNSVGKIATFYGNVGNLARSFAYLLGLGPQGVQMVGKMSTLATNYLIAKLRDIKELELIAPNRHRKHEVVFSVKQLMENYGVSANDVAKALLDSGFYAPTIYFPPIIEEALMIEPTETESKETLDMFAEALKKIVEDAKRNPEQLLKSPSNTSIARLDQAYANHPSTITPTYRVLKLRRMGKINYLK.

Position 278 is an N6-(pyridoxal phosphate)lysine (K278).

The protein belongs to the GcvP family. C-terminal subunit subfamily. The glycine cleavage system is composed of four proteins: P, T, L and H. In this organism, the P 'protein' is a heterodimer of two subunits. The cofactor is pyridoxal 5'-phosphate.

It carries out the reaction N(6)-[(R)-lipoyl]-L-lysyl-[glycine-cleavage complex H protein] + glycine + H(+) = N(6)-[(R)-S(8)-aminomethyldihydrolipoyl]-L-lysyl-[glycine-cleavage complex H protein] + CO2. In terms of biological role, the glycine cleavage system catalyzes the degradation of glycine. The P protein binds the alpha-amino group of glycine through its pyridoxal phosphate cofactor; CO(2) is released and the remaining methylamine moiety is then transferred to the lipoamide cofactor of the H protein. The protein is Probable glycine dehydrogenase (decarboxylating) subunit 2 of Saccharolobus islandicus (strain Y.N.15.51 / Yellowstone #2) (Sulfolobus islandicus).